Here is a 447-residue protein sequence, read N- to C-terminus: Phosphoglucosamine mutase (447 aa).

Ser102 functions as the Phosphoserine intermediate in the catalytic mechanism. 4 residues coordinate Mg(2+): Ser102, Asp241, Asp243, and Asp245. Ser102 is modified (phosphoserine).

Belongs to the phosphohexose mutase family. The cofactor is Mg(2+). In terms of processing, activated by phosphorylation.

It carries out the reaction alpha-D-glucosamine 1-phosphate = D-glucosamine 6-phosphate. Functionally, catalyzes the conversion of glucosamine-6-phosphate to glucosamine-1-phosphate. In Hamiltonella defensa subsp. Acyrthosiphon pisum (strain 5AT), this protein is Phosphoglucosamine mutase.